A 332-amino-acid chain; its full sequence is Hygromycin-B 7''-O-kinase (332 aa).

Asp-223 functions as the Proton acceptor in the catalytic mechanism.

The protein belongs to the aminoglycoside phosphotransferase family.

The catalysed reaction is hygromycin B + ATP = 7''-O-phosphohygromycin B + ADP + H(+). Functionally, the aminoglycoside phosphotransferases achieve inactivation of their antibiotic substrates by phosphorylation. The sequence is that of Hygromycin-B 7''-O-kinase (hyg) from Streptomyces hygroscopicus.